The chain runs to 273 residues: Undecaprenyl-diphosphatase (273 aa).

The next 7 helical transmembrane spans lie at 13–35 (GLVE…VFGN), 45–62 (VFEI…VFEY), 82–102 (FVLN…LFGK), 108–128 (LFNP…ILWV), 186–206 (TEFS…YDVL), 219–239 (LILI…KALL), and 250–270 (FAYY…SGWI).

Belongs to the UppP family.

The protein resides in the cell inner membrane. The enzyme catalyses di-trans,octa-cis-undecaprenyl diphosphate + H2O = di-trans,octa-cis-undecaprenyl phosphate + phosphate + H(+). Functionally, catalyzes the dephosphorylation of undecaprenyl diphosphate (UPP). Confers resistance to bacitracin. The polypeptide is Undecaprenyl-diphosphatase (Neisseria meningitidis serogroup A / serotype 4A (strain DSM 15465 / Z2491)).